The primary structure comprises 439 residues: Glutamate-1-semialdehyde 2,1-aminomutase (439 aa).

Position 279 is an N6-(pyridoxal phosphate)lysine (lysine 279).

The protein belongs to the class-III pyridoxal-phosphate-dependent aminotransferase family. HemL subfamily. Homodimer. Pyridoxal 5'-phosphate is required as a cofactor.

The protein localises to the cytoplasm. It catalyses the reaction (S)-4-amino-5-oxopentanoate = 5-aminolevulinate. The protein operates within porphyrin-containing compound metabolism; protoporphyrin-IX biosynthesis; 5-aminolevulinate from L-glutamyl-tRNA(Glu): step 2/2. The protein is Glutamate-1-semialdehyde 2,1-aminomutase of Rhodopirellula baltica (strain DSM 10527 / NCIMB 13988 / SH1).